We begin with the raw amino-acid sequence, 559 residues long: Polypeptide N-acetylgalactosaminyltransferase 1 (559 aa).

The Cytoplasmic segment spans residues Met1–Lys8. Residues Val9–Phe28 form a helical; Signal-anchor for type II membrane protein membrane-spanning segment. Residues Ser29 to Phe559 are Lumenal-facing. The segment at Gly45–Val66 is disordered. Asn95 carries N-linked (GlcNAc...) asparagine glycosylation. Intrachain disulfides connect Cys106-Cys339, Cys330-Cys408, Cys442-Cys459, Cys482-Cys497, and Cys523-Cys540. Residues Leu115–Arg225 are catalytic subdomain A. 2 residues coordinate substrate: Asp156 and Arg186. Mn(2+) contacts are provided by Asp209 and His211. Residues Pro285–Arg347 are catalytic subdomain B. Residue Trp316 coordinates substrate. Residue His344 coordinates Mn(2+). Positions 347 and 352 each coordinate substrate. One can recognise a Ricin B-type lectin domain in the interval Ser429 to Arg551. The N-linked (GlcNAc...) asparagine glycan is linked to Asn552.

The protein belongs to the glycosyltransferase 2 family. GalNAc-T subfamily. It depends on Mn(2+) as a cofactor.

Its subcellular location is the golgi apparatus. It localises to the golgi stack membrane. The protein localises to the secreted. It catalyses the reaction L-seryl-[protein] + UDP-N-acetyl-alpha-D-galactosamine = a 3-O-[N-acetyl-alpha-D-galactosaminyl]-L-seryl-[protein] + UDP + H(+). The catalysed reaction is L-threonyl-[protein] + UDP-N-acetyl-alpha-D-galactosamine = a 3-O-[N-acetyl-alpha-D-galactosaminyl]-L-threonyl-[protein] + UDP + H(+). It functions in the pathway protein modification; protein glycosylation. In terms of biological role, catalyzes the initial reaction in O-linked oligosaccharide biosynthesis, the transfer of an N-acetyl-D-galactosamine residue to a serine or threonine residue on the protein receptor. Has a broad spectrum of substrates such as apomucin-, MUC5AC-, MUC1- and MUC2-derived peptides. The sequence is that of Polypeptide N-acetylgalactosaminyltransferase 1 from Sus scrofa (Pig).